Consider the following 282-residue polypeptide: Small ribosomal subunit protein uS2 (282 aa).

The tract at residues 245–266 (AEEAVEELPLPTGEAQDEASSK) is disordered.

This sequence belongs to the universal ribosomal protein uS2 family.

The sequence is that of Small ribosomal subunit protein uS2 (rpsB) from Chlamydia trachomatis serovar D (strain ATCC VR-885 / DSM 19411 / UW-3/Cx).